The chain runs to 191 residues: Adenylate kinase (191 aa).

ATP is bound at residue G11–T16. Residues S31–L60 form an NMP region. AMP-binding positions include T32, R37, Q58 to L60, G86 to R89, and Q93. The LID stretch occupies residues K127 to D137. Position 128 (R128) interacts with ATP. Residues R134 and R145 each coordinate AMP. N173 lines the ATP pocket.

This sequence belongs to the adenylate kinase family. Monomer.

The protein localises to the cytoplasm. It carries out the reaction AMP + ATP = 2 ADP. Its pathway is purine metabolism; AMP biosynthesis via salvage pathway; AMP from ADP: step 1/1. Functionally, catalyzes the reversible transfer of the terminal phosphate group between ATP and AMP. Plays an important role in cellular energy homeostasis and in adenine nucleotide metabolism. This chain is Adenylate kinase, found in Azobacteroides pseudotrichonymphae genomovar. CFP2.